Reading from the N-terminus, the 396-residue chain is Probable sugar efflux transporter (396 aa).

The next 12 membrane-spanning stretches (helical) occupy residues 15–35, 50–70, 81–101, 103–123, 136–156, 170–190, 209–229, 246–266, 275–295, 299–319, 333–353, and 364–384; these read VVTL…PVGL, VGIM…PFML, LICL…SWSF, VLVI…SITA, AQAL…GLPL, FFAI…LLPL, PALM…YTAY, FATA…VIFG, ALVS…LPAA, IHLG…GLGM, VAMA…ALVG, and MIGY…IIIF.

Belongs to the major facilitator superfamily. SotB (TC 2.A.1.2) family.

The protein resides in the cell inner membrane. Involved in the efflux of sugars. The physiological role may be the reduction of the intracellular concentration of toxic sugars or sugar metabolites. This chain is Probable sugar efflux transporter, found in Escherichia coli O157:H7 (strain EC4115 / EHEC).